The primary structure comprises 266 residues: Cyclin-C (266 aa).

A Cyclin N-terminal domain is found at Ile-47–Ile-151.

Belongs to the cyclin family. Cyclin C subfamily. In terms of assembly, component of the Cdk8 module of the Mediator complex.

It localises to the nucleus. In terms of biological role, component of the Mediator complex, a coactivator involved in regulated gene transcription of nearly all RNA polymerase II-dependent genes. Mediator functions as a bridge to convey information from gene-specific regulatory proteins to the basal RNA polymerase II transcription machinery. Mediator is recruited to promoters by direct interactions with regulatory proteins and serves as a scaffold for the assembly of a functional preinitiation complex with RNA polymerase II and the general transcription factors. Binds to and activates cyclin-dependent kinase Cdk8 that phosphorylates the CTD (C-terminal domain) of the large subunit of RNA polymerase II (RNAp II), which may inhibit the formation of a transcription initiation complex. In Anopheles gambiae (African malaria mosquito), this protein is Cyclin-C (CycC).